Consider the following 159-residue polypeptide: Ribosomal RNA large subunit methyltransferase H (159 aa).

Residues Leu76, Gly108, and 127 to 132 each bind S-adenosyl-L-methionine; that span reads FGKLTL.

Belongs to the RNA methyltransferase RlmH family. As to quaternary structure, homodimer.

Its subcellular location is the cytoplasm. The catalysed reaction is pseudouridine(1915) in 23S rRNA + S-adenosyl-L-methionine = N(3)-methylpseudouridine(1915) in 23S rRNA + S-adenosyl-L-homocysteine + H(+). Specifically methylates the pseudouridine at position 1915 (m3Psi1915) in 23S rRNA. This Latilactobacillus sakei subsp. sakei (strain 23K) (Lactobacillus sakei subsp. sakei) protein is Ribosomal RNA large subunit methyltransferase H.